The following is a 274-amino-acid chain: MPSYAVLGATGNTGRAIVQVLLDRADTDTRIHICAYCRSKEKLFRVCPAAETSKSLSVFQGRLDDDSLIDECLRGTDAVFLVVAIVDNMPGCTVAMQTAEAVVASLQRLRATDPAIRLPRLVILSSASLEPTFCNDVPAPVHWVLKTAVSHLYRDLAAAEAYLRAQSDWLSATFVKPGGLVHDQARGHKVCLDRAQTPLSFLDLAAGMVEVADADDGRYHMRSVSVVPASRVAIFPWDGVYYTFTGLLFHFCPWTYRFLGEYKLQSRKERDKQA.

It belongs to the avfA family.

It functions in the pathway mycotoxin biosynthesis; sterigmatocystin biosynthesis. Functionally, oxidoreductase; part of the gene cluster that mediates the biosynthesis of sterigmatocystin (ST), a polyketide-derived furanocoumarin which is part of the most toxic and carcinogenic compounds among the known mycotoxins. The first step in the biosynthesis of sterigmatocystin is the production of hexanoate by the fatty acid synthase (FAS) units stcJ and stcK. The polyketide backbone is assembled by the non-reducing polyketide synthase stcA by condensation of the starter hexanoyl-CoA and 7 malonyl-CoA extender units followed by cyclization and release of norsolorinic acid. Norsolorinic acid is the first stable intermediate in the biosynthesis of sterigmatocystin and is converted into averantin (AVN) by the ketoreductase stcE which reduces the hexanoate ketone to an alcohol. Averantin is then oxidized into 5'-hydroxyaverantin (HAVN) by the cytochrome P450 monooxygenase stcF. 5'-hydroxyaverantin is further converted to 5'-oxyaverantin (OAVN) by the 5'-hydroxyaverantin dehydrogenase stcG. The next step is the conversion of OAVN into averufin (AVF) which is catalyzed by a yet to be identified enzyme. The cytochrome P450 monooxygenase stcB and the flavin-binding monooxygenase stcW are both required for the conversion of averufin to 1-hydroxyversicolorone. The esterase stcI probably catalyzes the formation of versiconal hemiacetal acetate from 1-hydroxyversicolorone. The oxydoreductase stcN then probably catalyzes the biosynthetic step from versiconal to versicolorin B (VERB). The next step is performed by the versicolorin B desaturase stcL to produce versicolorin A (VERA). The ketoreductase stcU and the cytochrome P450 monooxygenase stcS are involved in the conversion of versicolorin A to demethylsterigmatocystin. The Baeyer-Villiger oxidas stcQ and the reductase stcR might be involved in the biosynthetic step from versicolorin A to demethylsterigmatocystin. The final step in the biosynthesis of sterigmatocystin is the methylation of demethylsterigmatocystin catalyzed by the methyltransferase stcP. In Emericella nidulans (strain FGSC A4 / ATCC 38163 / CBS 112.46 / NRRL 194 / M139) (Aspergillus nidulans), this protein is Oxidoreductase stcQ.